The primary structure comprises 261 residues: Imidazole glycerol phosphate synthase subunit HisF (261 aa).

Residues D11 and D130 contribute to the active site.

It belongs to the HisA/HisF family. In terms of assembly, heterodimer of HisH and HisF.

The protein localises to the cytoplasm. The catalysed reaction is 5-[(5-phospho-1-deoxy-D-ribulos-1-ylimino)methylamino]-1-(5-phospho-beta-D-ribosyl)imidazole-4-carboxamide + L-glutamine = D-erythro-1-(imidazol-4-yl)glycerol 3-phosphate + 5-amino-1-(5-phospho-beta-D-ribosyl)imidazole-4-carboxamide + L-glutamate + H(+). Its pathway is amino-acid biosynthesis; L-histidine biosynthesis; L-histidine from 5-phospho-alpha-D-ribose 1-diphosphate: step 5/9. In terms of biological role, IGPS catalyzes the conversion of PRFAR and glutamine to IGP, AICAR and glutamate. The HisF subunit catalyzes the cyclization activity that produces IGP and AICAR from PRFAR using the ammonia provided by the HisH subunit. This is Imidazole glycerol phosphate synthase subunit HisF from Jannaschia sp. (strain CCS1).